Reading from the N-terminus, the 405-residue chain is MPDDASDLADRVQAGDLRLYELDDETDADTAAAARRAVLERETDADTDALGAFAFDADQAADTAVENLTGGAQLPLGVAGPVALSGGAADGEYYLPMATTEGALVASVNRGCSAITAAGGANARVTKTGMTRAPVFRVADVTEGAEVAQWADDNTDALAAAAESTTSHGELTDVTPYVVGDNVYLRFRYDTKDAMGMNMATIATEAASELVEDETPAELVAVSGNLCTDKKPAAINAVEGRGRTVTADVTIPQDVVEERFDTTPAAIEEANTRKNLIGSAKAGSLGFNAHAANVVAAVFLATGQDAAQVVEGANAITTVEARDDALYASVNLASLEVGTVGGGTTLPTQREALDVLGVRGGGDPAGANADALAEIIAVGALAGEINLLAALASRRLSAAHADLGR.

Catalysis depends on charge relay system residues E101 and D305. H400 serves as the catalytic Proton donor.

Belongs to the HMG-CoA reductase family. In terms of assembly, homodimer.

Its subcellular location is the cytoplasm. It catalyses the reaction (R)-mevalonate + 2 NADP(+) + CoA = (3S)-3-hydroxy-3-methylglutaryl-CoA + 2 NADPH + 2 H(+). It participates in metabolic intermediate biosynthesis; (R)-mevalonate biosynthesis; (R)-mevalonate from acetyl-CoA: step 3/3. Is competitively inhibited by lovastatin (formerly called mevinolin). Lovastatin also blocks the growth of H.salinarum, and this effect is reversed by addition of mevalonate, indicating the critical role that the mevalonate pathway plays in isoprenoid biosynthesis by these archaea. In terms of biological role, catalyzes the NADPH-dependent reductive deacylation of (S)-3-hydroxy-3-methylglutaryl-CoA (HMG-CoA) to (R)-mevalonate. Cannot use NADH instead of NADPH. Functions in the mevalonate (MVA) pathway leading to isopentenyl diphosphate (IPP), a key precursor for the biosynthesis of isoprenoid compounds such as archaeal membrane lipids. The protein is 3-hydroxy-3-methylglutaryl-coenzyme A reductase (hmgA) of Halobacterium salinarum (strain ATCC 29341 / DSM 671 / R1).